The following is a 557-amino-acid chain: Leucine-rich glioma-inactivated protein 1 (557 aa).

The first 34 residues, 1 to 34 (MESERSKRMGNACIPLKRIAYFLCLLSALLLTEG), serve as a signal peptide directing secretion. The LRRNT domain occupies 35-72 (KKPAKPKCPAVCTCTKDNALCENARSIPRTVPPDVISL). LRR repeat units follow at residues 92 to 113 (SLQL…AFIG), 116 to 137 (HLEY…TFRG), and 140 to 161 (SLIH…IFKG). The 51-residue stretch at 173–223 (NSFNCDCKLKWLVEWLGHTNATVEDIYCEGPPEYKKRKINSLSSKDFDCII) folds into the LRRCT domain. The N-linked (GlcNAc...) asparagine glycan is linked to Asn192. EAR repeat units lie at residues 225–267 (EFAK…EWDH), 271–313 (TFRN…KRDS), 317–364 (KFIK…KWNG), 366–415 (GFYS…QWNK), 419–462 (LFTN…KWGG), 464–506 (SFQD…NWDA), and 510–552 (KFVK…KHVI). The N-linked (GlcNAc...) asparagine glycan is linked to Asn277. Asn422 carries N-linked (GlcNAc...) asparagine glycosylation.

As to quaternary structure, oligomer. Interacts with KCNA1 within a complex containing KCNA1, KCNA4 and KCNAB1. Part of a complex containing ADAM22, DLG4/PSD95 and CACNG2 (stargazin). Can bind to ADAM11 and ADAM23. In terms of processing, glycosylated.

Its subcellular location is the secreted. The protein localises to the synapse. It localises to the cytoplasm. In terms of biological role, regulates voltage-gated potassium channels assembled from KCNA1, KCNA4 and KCNAB1. It slows down channel inactivation by precluding channel closure mediated by the KCNAB1 subunit. Ligand for ADAM22 that positively regulates synaptic transmission mediated by AMPA-type glutamate receptors. Plays a role in suppressing the production of MMP1/3 through the phosphatidylinositol 3-kinase/ERK pathway. This chain is Leucine-rich glioma-inactivated protein 1 (LGI1), found in Pongo abelii (Sumatran orangutan).